Reading from the N-terminus, the 156-residue chain is MKEKRDLKIQAIENGTVIDHITAGQALNVLRILRISSAFRATVSFVMNAPGARGKKDVVKIEGKELSVEELNRIALISPKATINIIRDFEVVQKNKVVLPSYVEGVVRCMNSNCISNSSEPIKSKFSVLRTEEEGVSLHCLYCEHVISEEIAENLL.

Zn(2+) contacts are provided by C109, C114, C140, and C143.

The protein belongs to the PyrI family. In terms of assembly, contains catalytic and regulatory chains. Zn(2+) is required as a cofactor.

Its function is as follows. Involved in allosteric regulation of aspartate carbamoyltransferase. The chain is Aspartate carbamoyltransferase regulatory chain from Methanosarcina acetivorans (strain ATCC 35395 / DSM 2834 / JCM 12185 / C2A).